The sequence spans 298 residues: GTPase Era (298 aa).

The Era-type G domain maps to 3–170 (KSGFVAILGR…IKLLTDNLEE (168 aa)). A G1 region spans residues 11-18 (GRPNVGKS). Position 11 to 18 (11 to 18 (GRPNVGKS)) interacts with GTP. The tract at residues 37–41 (QTTRN) is G2. The G3 stretch occupies residues 58-61 (DTPG). Residues 58–62 (DTPGI) and 120–123 (NKID) each bind GTP. Residues 120–123 (NKID) form a G4 region. The interval 149-151 (ISA) is G5. One can recognise a KH type-2 domain in the interval 201–279 (TQQEVPHSVA…YLETWVKVKK (79 aa)).

The protein belongs to the TRAFAC class TrmE-Era-EngA-EngB-Septin-like GTPase superfamily. Era GTPase family. In terms of assembly, monomer.

It localises to the cytoplasm. Its subcellular location is the cell membrane. Its function is as follows. An essential GTPase that binds both GDP and GTP, with rapid nucleotide exchange. Plays a role in 16S rRNA processing and 30S ribosomal subunit biogenesis and possibly also in cell cycle regulation and energy metabolism. In Streptococcus pyogenes serotype M3 (strain ATCC BAA-595 / MGAS315), this protein is GTPase Era.